Here is a 463-residue protein sequence, read N- to C-terminus: Mitochondrial dynamics protein MID51 (463 aa).

Topologically, residues 1 to 23 (MAGAGERKGKKDDNGIGTAIDFV) are mitochondrial intermembrane. Residues 24-46 (LSNARLVLGVGGAAMLGIATLAV) form a helical membrane-spanning segment. Over 47–463 (KRMYDRAISA…LSEPEVLLQT (417 aa)) the chain is Cytoplasmic. Residues 49–195 (MYDRAISAPT…LSGSLYDDLQ (147 aa)) form a dimerization region. Phosphoserine occurs at positions 55, 59, 79, and 94. Residues 57 to 77 (PTSPTRLSHSGKRSWEEPNWM) are disordered. An important for interaction with DNM1L region spans residues 160–169 (AAVDICAELR). Residues S187, S189, and H201 each coordinate ADP. The tract at residues 234–243 (RRENPEYFPR) is important for interaction with DNM1L. The ADP site is built by S340, R342, and K368.

This sequence belongs to the MID49/MID51 family. As to quaternary structure, homodimer. Interacts with DNM1L.

It is found in the mitochondrion outer membrane. Mitochondrial outer membrane protein which regulates mitochondrial fission/fusion dynamics. Promotes the recruitment and association of the fission mediator dynamin-related protein 1 (DNM1L) to the mitochondrial surface independently of the mitochondrial fission FIS1 and MFF proteins. Regulates DNM1L GTPase activity and DNM1L oligomerization. Binds ADP and can also bind GDP, although with lower affinity. Does not bind CDP, UDP, ATP, AMP or GTP. Inhibits DNM1L GTPase activity in the absence of bound ADP. Requires ADP to stimulate DNM1L GTPase activity and the assembly of DNM1L into long, oligomeric tubules with a spiral pattern, as opposed to the ring-like DNM1L oligomers observed in the absence of bound ADP. Does not require ADP for its function in recruiting DNM1L. The protein is Mitochondrial dynamics protein MID51 (Mief1) of Mus musculus (Mouse).